The primary structure comprises 209 residues: Small ribosomal subunit protein uS4 (209 aa).

Residues 98–161 enclose the S4 RNA-binding domain; it reads ARLDNVVYRM…RDLEVIKKAV (64 aa).

The protein belongs to the universal ribosomal protein uS4 family. In terms of assembly, part of the 30S ribosomal subunit. Contacts protein S5. The interaction surface between S4 and S5 is involved in control of translational fidelity.

Functionally, one of the primary rRNA binding proteins, it binds directly to 16S rRNA where it nucleates assembly of the body of the 30S subunit. Its function is as follows. With S5 and S12 plays an important role in translational accuracy. This Thermotoga petrophila (strain ATCC BAA-488 / DSM 13995 / JCM 10881 / RKU-1) protein is Small ribosomal subunit protein uS4.